The primary structure comprises 560 residues: DNA ligase B (560 aa).

K124 serves as the catalytic N6-AMP-lysine intermediate.

Belongs to the NAD-dependent DNA ligase family. LigB subfamily.

It carries out the reaction NAD(+) + (deoxyribonucleotide)n-3'-hydroxyl + 5'-phospho-(deoxyribonucleotide)m = (deoxyribonucleotide)n+m + AMP + beta-nicotinamide D-nucleotide.. Catalyzes the formation of phosphodiester linkages between 5'-phosphoryl and 3'-hydroxyl groups in double-stranded DNA using NAD as a coenzyme and as the energy source for the reaction. The protein is DNA ligase B of Shigella flexneri.